The following is a 190-amino-acid chain: Cancer-related nucleoside-triphosphatase (190 aa).

Ala2 carries the N-acetylalanine modification. ATP is bound by residues 9–16 and 109–116; these read GPPGVGKT and VCVIDEIG. Lys165 bears the N6-acetyllysine mark.

The protein belongs to the THEP1 NTPase family. In terms of assembly, monomer.

It catalyses the reaction a ribonucleoside 5'-triphosphate + H2O = a ribonucleoside 5'-diphosphate + phosphate + H(+). It carries out the reaction 5-methyl-UTP + H2O = 5-methyl-UDP + phosphate + H(+). The enzyme catalyses CTP + H2O = CDP + phosphate + H(+). The catalysed reaction is ATP + H2O = ADP + phosphate + H(+). It catalyses the reaction GTP + H2O = GDP + phosphate + H(+). Functionally, has nucleotide phosphatase activity towards ATP, GTP, CTP, TTP and UTP. Hydrolyzes nucleoside diphosphates with lower efficiency. The sequence is that of Cancer-related nucleoside-triphosphatase from Homo sapiens (Human).